The following is a 625-amino-acid chain: Cysteine-rich receptor-like protein kinase 46 (625 aa).

The N-terminal stretch at 1–23 (MASTLISSLAVVLPLTLLAPSMS) is a signal peptide. The Extracellular portion of the chain corresponds to 24-252 (MKISRIDVLG…LLAMSFTKEN (229 aa)). 2 Gnk2-homologous domains span residues 29–130 (IDVL…NYSF) and 135–237 (VSHQ…NYTF). N-linked (GlcNAc...) asparagine glycosylation is found at Asn38, Asn127, Asn234, and Asn252. A helical membrane pass occupies residues 253–273 (LTYIFVISMVGVLAIAAGFWC). The Cytoplasmic portion of the chain corresponds to 274–625 (GKCFYMRTSP…TKPPFLHDSM (352 aa)). A Protein kinase domain is found at 331–621 (FNESCKLGVG…LPTPTKPPFL (291 aa)). Residues 337–345 (LGVGGYGEV) and Lys359 each bind ATP. Tyr404 bears the Phosphotyrosine mark. Asp454 serves as the catalytic Proton acceptor. Position 458 is a phosphoserine (Ser458). Thr499 bears the Phosphothreonine mark. Tyr507 bears the Phosphotyrosine mark.

It belongs to the protein kinase superfamily. Ser/Thr protein kinase family. CRK subfamily.

Its subcellular location is the membrane. The enzyme catalyses L-seryl-[protein] + ATP = O-phospho-L-seryl-[protein] + ADP + H(+). It catalyses the reaction L-threonyl-[protein] + ATP = O-phospho-L-threonyl-[protein] + ADP + H(+). This chain is Cysteine-rich receptor-like protein kinase 46, found in Arabidopsis thaliana (Mouse-ear cress).